The sequence spans 400 residues: Enoyl-[acyl-carrier-protein] reductase [NADH] (400 aa).

NAD(+) is bound by residues 48 to 53, 74 to 75, 111 to 112, and 139 to 140; these read GSSSGY, FE, DA, and LA. Tyr-225 contacts substrate. The active-site Proton donor is Tyr-235. NAD(+)-binding positions include Lys-244 and 273 to 275; that span reads VVT.

Belongs to the TER reductase family. In terms of assembly, monomer.

It carries out the reaction a 2,3-saturated acyl-[ACP] + NAD(+) = a (2E)-enoyl-[ACP] + NADH + H(+). It functions in the pathway lipid metabolism; fatty acid biosynthesis. Functionally, involved in the final reduction of the elongation cycle of fatty acid synthesis (FAS II). Catalyzes the reduction of a carbon-carbon double bond in an enoyl moiety that is covalently linked to an acyl carrier protein (ACP). This is Enoyl-[acyl-carrier-protein] reductase [NADH] from Shewanella woodyi (strain ATCC 51908 / MS32).